The sequence spans 1051 residues: Outer capsid protein VP2 (1051 aa).

This sequence belongs to the orbivirus VP2 family.

It localises to the virion. Functionally, the VP2 protein is one of the two proteins (with VP5) which constitute the virus particle outer capsid. It is the major target of the host immunogenic response. The protein is Outer capsid protein VP2 (Segment-2) of African horse sickness virus (AHSV).